We begin with the raw amino-acid sequence, 506 residues long: 2,3-bisphosphoglycerate-independent phosphoglycerate mutase (506 aa).

2 residues coordinate Mn(2+): Asp13 and Ser63. Ser63 serves as the catalytic Phosphoserine intermediate. Residues His124, 153 to 154, Arg183, Arg189, 254 to 257, and Lys330 each bind substrate; these read RD and RADR. Mn(2+) contacts are provided by Asp396, His400, Asp437, His438, and His456.

The protein belongs to the BPG-independent phosphoglycerate mutase family. Monomer. Requires Mn(2+) as cofactor.

The enzyme catalyses (2R)-2-phosphoglycerate = (2R)-3-phosphoglycerate. It functions in the pathway carbohydrate degradation; glycolysis; pyruvate from D-glyceraldehyde 3-phosphate: step 3/5. In terms of biological role, catalyzes the interconversion of 2-phosphoglycerate and 3-phosphoglycerate. In Cereibacter sphaeroides (strain ATCC 17023 / DSM 158 / JCM 6121 / CCUG 31486 / LMG 2827 / NBRC 12203 / NCIMB 8253 / ATH 2.4.1.) (Rhodobacter sphaeroides), this protein is 2,3-bisphosphoglycerate-independent phosphoglycerate mutase.